We begin with the raw amino-acid sequence, 103 residues long: Large ribosomal subunit protein bL21 (103 aa).

The protein belongs to the bacterial ribosomal protein bL21 family. As to quaternary structure, part of the 50S ribosomal subunit. Contacts protein L20.

This protein binds to 23S rRNA in the presence of protein L20. The sequence is that of Large ribosomal subunit protein bL21 from Mycobacterium leprae (strain Br4923).